The following is a 24-amino-acid chain: Calreticulin (24 aa).

This sequence belongs to the calreticulin family. In terms of assembly, monomer. Component of an EIF2 complex at least composed of CELF1/CUGBP1, CALR, CALR3, EIF2S1, EIF2S2, HSP90B1 and HSPA5. Interacts with PDIA3/ERp57 and SPACA9. Interacts with TRIM21. Interacts with NR3C1. Interacts with PPIB. Interacts (via P-domain) with PDIA5. Interacts with CLCC1. As to expression, pancreas.

Its subcellular location is the endoplasmic reticulum lumen. The protein resides in the cytoplasm. It localises to the cytosol. The protein localises to the cytolytic granule. It is found in the secreted. Its subcellular location is the extracellular space. The protein resides in the extracellular matrix. It localises to the cell surface. The protein localises to the sarcoplasmic reticulum lumen. It is found in the cytoplasmic vesicle. Its subcellular location is the secretory vesicle. The protein resides in the cortical granule. In terms of biological role, calcium-binding chaperone that promotes folding, oligomeric assembly and quality control in the endoplasmic reticulum (ER) via the calreticulin/calnexin cycle. This lectin interacts transiently with almost all of the monoglucosylated glycoproteins that are synthesized in the ER. Interacts with the DNA-binding domain of NR3C1 and mediates its nuclear export. Involved in maternal gene expression regulation. May participate in oocyte maturation via the regulation of calcium homeostasis. Present in the cortical granules of non-activated oocytes, is exocytosed during the cortical reaction in response to oocyte activation and might participate in the block to polyspermy. This is Calreticulin (CALR) from Canis lupus familiaris (Dog).